The sequence spans 128 residues: Fluoride-specific ion channel FluC (128 aa).

4 helical membrane-spanning segments follow: residues 4-24, 37-57, 72-92, and 101-121; these read LLLVAAGGALGSVARYLVGVQ, TFIVNLTGGLLMGLLAAWLAL, VGVMGGFTTFSAFSLETALMI, and FTYTTASVILSVAAIFAGLLI. Residues G76 and T79 each contribute to the Na(+) site.

It belongs to the fluoride channel Fluc/FEX (TC 1.A.43) family.

The protein resides in the cell inner membrane. It carries out the reaction fluoride(in) = fluoride(out). With respect to regulation, na(+) is not transported, but it plays an essential structural role and its presence is essential for fluoride channel function. Functionally, fluoride-specific ion channel. Important for reducing fluoride concentration in the cell, thus reducing its toxicity. The polypeptide is Fluoride-specific ion channel FluC (Caulobacter sp. (strain K31)).